Consider the following 189-residue polypeptide: Glycerol-3-phosphate acyltransferase (189 aa).

Transmembrane regions (helical) follow at residues 1 to 21 (MFWL…AILL), 51 to 71 (LAVL…LIAH), 77 to 97 (LQQQ…PLYF), 111 to 131 (MLLG…ALTF), and 151 to 171 (LLAW…LLIV).

The protein belongs to the PlsY family. In terms of assembly, probably interacts with PlsX.

It localises to the cell inner membrane. The enzyme catalyses an acyl phosphate + sn-glycerol 3-phosphate = a 1-acyl-sn-glycero-3-phosphate + phosphate. Its pathway is lipid metabolism; phospholipid metabolism. Catalyzes the transfer of an acyl group from acyl-phosphate (acyl-PO(4)) to glycerol-3-phosphate (G3P) to form lysophosphatidic acid (LPA). This enzyme utilizes acyl-phosphate as fatty acyl donor, but not acyl-CoA or acyl-ACP. The sequence is that of Glycerol-3-phosphate acyltransferase from Pseudomonas fluorescens (strain ATCC BAA-477 / NRRL B-23932 / Pf-5).